The following is a 416-amino-acid chain: 4-hydroxy-3-methylbut-2-en-1-yl diphosphate synthase (flavodoxin) (416 aa).

Cys-304, Cys-307, Cys-350, and Glu-357 together coordinate [4Fe-4S] cluster.

It belongs to the IspG family. [4Fe-4S] cluster serves as cofactor.

The catalysed reaction is (2E)-4-hydroxy-3-methylbut-2-enyl diphosphate + oxidized [flavodoxin] + H2O + 2 H(+) = 2-C-methyl-D-erythritol 2,4-cyclic diphosphate + reduced [flavodoxin]. Its pathway is isoprenoid biosynthesis; isopentenyl diphosphate biosynthesis via DXP pathway; isopentenyl diphosphate from 1-deoxy-D-xylulose 5-phosphate: step 5/6. Its function is as follows. Converts 2C-methyl-D-erythritol 2,4-cyclodiphosphate (ME-2,4cPP) into 1-hydroxy-2-methyl-2-(E)-butenyl 4-diphosphate. This is 4-hydroxy-3-methylbut-2-en-1-yl diphosphate synthase (flavodoxin) from Rhizobium etli (strain CIAT 652).